The following is a 218-amino-acid chain: MNQSSLLAEFGDPITRVENALQALREGRGVLLLDDEDRENEGDIIYAVESLTTVQMALMIRECSGIVCLCLTEAQADRLALPLMVVNNNSANQTAFTVSIEAKHGVTTGVSAQDRVTTIKTAANPQAKPEDLARPGHVFPLRARAGGVLARRGHTEGTVDLMQMAGLQPAGVLCELTNPDGSMAKTPEIIAFGKLHNMPVLTIEDMVQYRIQFDLKLA.

D-ribulose 5-phosphate contacts are provided by residues 38 to 39 (RE), aspartate 43, 151 to 155 (RRGHT), and glutamate 175. Residue glutamate 39 participates in Mg(2+) binding. Histidine 154 is a binding site for Mg(2+).

It belongs to the DHBP synthase family. Homodimer. Mg(2+) serves as cofactor. Requires Mn(2+) as cofactor.

It carries out the reaction D-ribulose 5-phosphate = (2S)-2-hydroxy-3-oxobutyl phosphate + formate + H(+). The protein operates within cofactor biosynthesis; riboflavin biosynthesis; 2-hydroxy-3-oxobutyl phosphate from D-ribulose 5-phosphate: step 1/1. Functionally, catalyzes the conversion of D-ribulose 5-phosphate to formate and 3,4-dihydroxy-2-butanone 4-phosphate. This Vibrio cholerae serotype O1 (strain ATCC 39541 / Classical Ogawa 395 / O395) protein is 3,4-dihydroxy-2-butanone 4-phosphate synthase.